The primary structure comprises 151 residues: Aspartate carbamoyltransferase regulatory chain (151 aa).

Residues C107, C112, C135, and C138 each contribute to the Zn(2+) site.

Belongs to the PyrI family. In terms of assembly, contains catalytic and regulatory chains. Requires Zn(2+) as cofactor.

In terms of biological role, involved in allosteric regulation of aspartate carbamoyltransferase. The protein is Aspartate carbamoyltransferase regulatory chain of Thermococcus onnurineus (strain NA1).